A 273-amino-acid chain; its full sequence is MGLDGGTIPTRCELVKTKKKEVKVFDKDQVDFGKWFLCALAQDTLSEPIVLDDLGNLFNKDNIIEALLNGSLETSKNFSHIRSLRSIYTVNFSPNPAHEKDSTVSPWLCPITKIEVGSSNYKFKFLKTCGHVFSEKAFKELKNDDSNNNNNNNNNNKKEIDSSKDNLSCFLCSKEYITNDLITINPSGEEFEQMKVTLQEKLANSKKKSSKKSDKKPDNKKRSLESNLASESSFTSNTLAQTNEEISKKMKSEAFSSIFKSNSNNDTTKTPNK.

A disordered region spans residues 202-247 (LANSKKKSSKKSDKKPDNKKRSLESNLASESSFTSNTLAQTNEEIS). Residues 211–224 (KKSDKKPDNKKRSL) are compositionally biased toward basic and acidic residues. Over residues 225–244 (ESNLASESSFTSNTLAQTNE) the composition is skewed to polar residues.

Belongs to the rtf2 family.

It is found in the chromosome. Replication termination factor which is a component of the elongating replisome. Interacts with nascent DNA. The polypeptide is Replication termination factor 2 (rtf2) (Dictyostelium discoideum (Social amoeba)).